We begin with the raw amino-acid sequence, 347 residues long: D-alanine--D-alanine ligase (347 aa).

The ATP-grasp domain occupies 131-333 (KRVLESAGIA…YPELIERLVD (203 aa)). 161–216 (EEKLAYPVFAKPSNMGSSVGISKSENQEELRQALKLAFRYDSRVLVEQGVNAREIE) lines the ATP pocket. Mg(2+)-binding residues include Asp287, Glu300, and Asn302.

This sequence belongs to the D-alanine--D-alanine ligase family. Requires Mg(2+) as cofactor. It depends on Mn(2+) as a cofactor.

The protein localises to the cytoplasm. It carries out the reaction 2 D-alanine + ATP = D-alanyl-D-alanine + ADP + phosphate + H(+). Its pathway is cell wall biogenesis; peptidoglycan biosynthesis. Functionally, cell wall formation. The chain is D-alanine--D-alanine ligase from Streptococcus pneumoniae (strain P1031).